The primary structure comprises 229 residues: Clathrin light chain B (229 aa).

The span at 1 to 17 (MADDFGFFSSSESGAPE) shows a compositional bias: low complexity. The segment at 1–82 (MADDFGFFSS…NGDVFQEANG (82 aa)) is disordered. Phosphoserine occurs at positions 11 and 13. Residues 58–73 (GPTSGAGSEDMGTTVN) show a composition bias toward polar residues. The tract at residues 93–155 (ADRLTQEPES…QVEKNKINNR (63 aa)) is involved in binding clathrin heavy chain. T187 bears the Phosphothreonine mark. C199 and C209 are disulfide-bonded. An N6-acetyllysine modification is found at K204. Position 217 is a phosphoserine (S217).

It belongs to the clathrin light chain family. As to quaternary structure, clathrin coats are formed from molecules containing 3 heavy chains and 3 light chains. Interacts (via N-terminus) with HIP1. Interacts with HIP1R.

The protein resides in the cytoplasmic vesicle membrane. It localises to the membrane. It is found in the coated pit. In terms of biological role, clathrin is the major protein of the polyhedral coat of coated pits and vesicles. This Homo sapiens (Human) protein is Clathrin light chain B (CLTB).